An 873-amino-acid chain; its full sequence is Bifunctional heparan sulfate N-deacetylase/N-sulfotransferase 3 (873 aa).

Residues 1–13 lie on the Cytoplasmic side of the membrane; sequence MSFIMKPHRHFQR. The chain crosses the membrane as a helical; Signal-anchor for type II membrane protein span at residues 14–34; sequence TLILLATFCMVSIIISAYYLY. The Lumenal portion of the chain corresponds to 35 to 873; the sequence is SGYKQESEVS…WLRQELQKVR (839 aa). The segment at 36–589 is heparan sulfate N-deacetylase 3; it reads GYKQESEVSG…KRHRDIWSKE (554 aa). 4 N-linked (GlcNAc...) asparagine glycosylation sites follow: asparagine 146, asparagine 226, asparagine 342, and asparagine 392. The tract at residues 590-873 is heparan sulfate N-sulfotransferase 3; it reads KTCDRLPKFL…WLRQELQKVR (284 aa). Lysine 605 acts as the For sulfotransferase activity in catalysis. Residue 605–609 participates in 3'-phosphoadenylyl sulfate binding; the sequence is KTGTT. N-linked (GlcNAc...) asparagine glycosylation occurs at asparagine 658. A 3'-phosphoadenylyl sulfate-binding site is contributed by serine 703. A glycan (N-linked (GlcNAc...) asparagine) is linked at asparagine 794. Cysteine 809 and cysteine 819 are joined by a disulfide. Residue 824–828 participates in 3'-phosphoadenylyl sulfate binding; sequence KGRKY.

This sequence belongs to the sulfotransferase 1 family. NDST subfamily. Monomer. As to expression, strongly expressed strongly in brain. Expressed at high level at embryonic day 11 compared to other stages of development. Weakly expressed in adult heart, kidney, muscle, endothelial cells and testis but not in other tissues.

It is found in the golgi apparatus membrane. The catalysed reaction is alpha-D-glucosaminyl-[heparan sulfate](n) + 3'-phosphoadenylyl sulfate = N-sulfo-alpha-D-glucosaminyl-[heparan sulfate](n) + adenosine 3',5'-bisphosphate + 2 H(+). The protein operates within glycan metabolism; heparan sulfate biosynthesis. It participates in glycan metabolism; heparin biosynthesis. Functionally, essential bifunctional enzyme that catalyzes both the N-deacetylation and the N-sulfation of glucosamine (GlcNAc) of the glycosaminoglycan in heparan sulfate. Modifies the GlcNAc-GlcA disaccharide repeating sugar backbone to make N-sulfated heparosan, a prerequisite substrate for later modifications in heparin biosynthesis. Has high deacetylase activity but low sulfotransferase activity. In Mus musculus (Mouse), this protein is Bifunctional heparan sulfate N-deacetylase/N-sulfotransferase 3 (Ndst3).